A 335-amino-acid polypeptide reads, in one-letter code: Cathepsin B (335 aa).

A signal peptide spans 1–19; the sequence is MWQLLATLSCLLVLTSARS. Residues 20 to 79 constitute a propeptide, activation peptide; the sequence is SLHFPPLSDEMVNYVNKQNTTWKAGHNFYNVDLSYVKKLCGAILGGPKLPQRDAFAADMV. Disulfide bonds link Cys93–Cys122, Cys105–Cys150, Cys141–Cys207, Cys142–Cys146, Cys179–Cys211, and Cys187–Cys198. Cys108 is an active-site residue. Asn192 carries an N-linked (GlcNAc...) asparagine glycan. At Lys220 the chain carries N6-acetyllysine. Active-site residues include His278 and Asn298. A propeptide spanning residues 333-335 is cleaved from the precursor; that stretch reads HQH.

The protein belongs to the peptidase C1 family. As to quaternary structure, dimer of a heavy chain and a light chain cross-linked by a disulfide bond. Interacts with SRPX2. Directly interacts with SHKBP1.

It is found in the lysosome. It localises to the melanosome. The protein localises to the secreted. The protein resides in the extracellular space. Its subcellular location is the apical cell membrane. It carries out the reaction Hydrolysis of proteins with broad specificity for peptide bonds. Preferentially cleaves -Arg-Arg-|-Xaa bonds in small molecule substrates (thus differing from cathepsin L). In addition to being an endopeptidase, shows peptidyl-dipeptidase activity, liberating C-terminal dipeptides.. Functionally, thiol protease which is believed to participate in intracellular degradation and turnover of proteins. Cleaves matrix extracellular phosphoglycoprotein MEPE. Involved in the solubilization of cross-linked TG/thyroglobulin in the thyroid follicle lumen. Has also been implicated in tumor invasion and metastasis. This Ovis aries (Sheep) protein is Cathepsin B (CTSB).